Reading from the N-terminus, the 316-residue chain is Ribosomal RNA small subunit methyltransferase H (316 aa).

Residues 35–37 (SGH), aspartate 55, phenylalanine 84, aspartate 105, and glutamine 112 each bind S-adenosyl-L-methionine.

This sequence belongs to the methyltransferase superfamily. RsmH family.

The protein resides in the cytoplasm. The catalysed reaction is cytidine(1402) in 16S rRNA + S-adenosyl-L-methionine = N(4)-methylcytidine(1402) in 16S rRNA + S-adenosyl-L-homocysteine + H(+). Its function is as follows. Specifically methylates the N4 position of cytidine in position 1402 (C1402) of 16S rRNA. This chain is Ribosomal RNA small subunit methyltransferase H, found in Streptococcus pyogenes serotype M49 (strain NZ131).